Here is an 85-residue protein sequence, read N- to C-terminus: UPF0291 protein SP_1473 (85 aa).

The disordered stretch occupies residues 62 to 85; it reads TPEKLRQVQREKGLHGRSLDDPNS.

It belongs to the UPF0291 family.

The protein localises to the cytoplasm. The chain is UPF0291 protein SP_1473 from Streptococcus pneumoniae serotype 4 (strain ATCC BAA-334 / TIGR4).